The sequence spans 303 residues: ADP-ribosyl cyclase/cyclic ADP-ribose hydrolase 1 (303 aa).

Over 1 to 21 (MANYEFSQVSEDRPGCRLTRK) the chain is Cytoplasmic. Residues 22 to 44 (AQIGLGVGLLLLVALVVVVVIVL) form a helical; Signal-anchor for type II membrane protein membrane-spanning segment. At 45–303 (WPRSPLVWKG…PEHPSCRLNV (259 aa)) the chain is on the extracellular side. 3 disulfides stabilise this stretch: cysteine 69-cysteine 85, cysteine 102-cysteine 183, and cysteine 163-cysteine 176. An N-linked (GlcNAc...) asparagine glycan is attached at asparagine 103. Cysteine 122 is a catalytic residue. An N-linked (GlcNAc...) asparagine glycan is attached at asparagine 123. The active site involves cysteine 204. Asparagine 212 and asparagine 222 each carry an N-linked (GlcNAc...) asparagine glycan. Disulfide bonds link cysteine 257–cysteine 278 and cysteine 290–cysteine 299.

It belongs to the ADP-ribosyl cyclase family. In terms of assembly, homodimer. As to expression, spleen, liver, heart, thymus, thyroid gland, ileum, colon, cerebellum, salivary gland, adrenal gland, jejunum, islets of Langerhans and osteoclasts.

It localises to the cell membrane. The enzyme catalyses NAD(+) = cyclic ADP-beta-D-ribose + nicotinamide + H(+). It catalyses the reaction nicotinate + NADP(+) = nicotinate-adenine dinucleotide phosphate + nicotinamide. The catalysed reaction is NAD(+) + H2O = ADP-D-ribose + nicotinamide + H(+). With respect to regulation, both NAADP and cADPR synthesis are inhibited by nicotinic acid. In terms of biological role, synthesizes the second messengers cyclic ADP-ribose and nicotinate-adenine dinucleotide phosphate, the former a second messenger for glucose-induced insulin secretion, the latter a Ca(2+) mobilizer. Also has cADPR hydrolase activity. Its function is as follows. Regulates osteoclastic bone resorption, probably via production of cyclic ADP-ribose and triggering of a cytosolic calcium ion signal through ryanodine receptor activation. The protein is ADP-ribosyl cyclase/cyclic ADP-ribose hydrolase 1 (Cd38) of Rattus norvegicus (Rat).